A 274-amino-acid chain; its full sequence is Phosphatidylglycerol--prolipoprotein diacylglyceryl transferase (274 aa).

Helical transmembrane passes span 19–39 (VGSV…VLGL), 59–79 (LAIW…VLFQ), 93–113 (IWRG…AALI), and 120–140 (VSFW…QAIG). R141 provides a ligand contact to a 1,2-diacyl-sn-glycero-3-phospho-(1'-sn-glycerol). 3 helical membrane passes run 181–201 (TFLY…ALFF), 209–229 (GTIF…IEGL), and 243–263 (QVVS…LYLL).

Belongs to the Lgt family.

It localises to the cell inner membrane. The catalysed reaction is L-cysteinyl-[prolipoprotein] + a 1,2-diacyl-sn-glycero-3-phospho-(1'-sn-glycerol) = an S-1,2-diacyl-sn-glyceryl-L-cysteinyl-[prolipoprotein] + sn-glycerol 1-phosphate + H(+). It participates in protein modification; lipoprotein biosynthesis (diacylglyceryl transfer). Its function is as follows. Catalyzes the transfer of the diacylglyceryl group from phosphatidylglycerol to the sulfhydryl group of the N-terminal cysteine of a prolipoprotein, the first step in the formation of mature lipoproteins. This Acaryochloris marina (strain MBIC 11017) protein is Phosphatidylglycerol--prolipoprotein diacylglyceryl transferase.